The sequence spans 413 residues: Lipoyl synthase, mitochondrial (413 aa).

The N-terminal 33 residues, 1 to 33 (MAAATNRFRALYSSSRVATPQAGSASYLSYRGY), are a transit peptide targeting the mitochondrion. Residues C133, C138, C144, C164, C168, C171, and S379 each coordinate [4Fe-4S] cluster. The Radical SAM core domain maps to 147–368 (GGDKAAATAT…RQRALDMGFL (222 aa)).

This sequence belongs to the radical SAM superfamily. Lipoyl synthase family. [4Fe-4S] cluster serves as cofactor.

Its subcellular location is the mitochondrion. It carries out the reaction [[Fe-S] cluster scaffold protein carrying a second [4Fe-4S](2+) cluster] + N(6)-octanoyl-L-lysyl-[protein] + 2 oxidized [2Fe-2S]-[ferredoxin] + 2 S-adenosyl-L-methionine + 4 H(+) = [[Fe-S] cluster scaffold protein] + N(6)-[(R)-dihydrolipoyl]-L-lysyl-[protein] + 4 Fe(3+) + 2 hydrogen sulfide + 2 5'-deoxyadenosine + 2 L-methionine + 2 reduced [2Fe-2S]-[ferredoxin]. Its pathway is protein modification; protein lipoylation via endogenous pathway; protein N(6)-(lipoyl)lysine from octanoyl-[acyl-carrier-protein]: step 2/2. Functionally, catalyzes the radical-mediated insertion of two sulfur atoms into the C-6 and C-8 positions of the octanoyl moiety bound to the lipoyl domains of lipoate-dependent enzymes, thereby converting the octanoylated domains into lipoylated derivatives. In Emericella nidulans (strain FGSC A4 / ATCC 38163 / CBS 112.46 / NRRL 194 / M139) (Aspergillus nidulans), this protein is Lipoyl synthase, mitochondrial.